Consider the following 460-residue polypeptide: Ecdysteroid UDP-glucosyltransferase (460 aa).

The N-terminal stretch at 1–18 (MFISILLLALAVERILCA) is a signal peptide.

The protein belongs to the UDP-glycosyltransferase family.

Its function is as follows. Catalyzes the transfer of glucose from UDP-glucose to ecdysteroids which are insect molting hormones. Expression of egt interferes with normal insect development and block molting. In Lacanobia oleracea granulosis virus (LoGV), this protein is Ecdysteroid UDP-glucosyltransferase (EGT).